Here is a 557-residue protein sequence, read N- to C-terminus: Urease subunit alpha (557 aa).

One can recognise a Urease domain in the interval 130–557 (GFIDTHIHWV…LPLTQLYFIY (428 aa)). Residues His-135, His-137, and Lys-217 each contribute to the Ni(2+) site. At Lys-217 the chain carries N6-carboxylysine. His-219 lines the substrate pocket. Residues His-246 and His-272 each coordinate Ni(2+). The active-site Proton donor is the His-320. Asp-360 provides a ligand contact to Ni(2+).

Belongs to the metallo-dependent hydrolases superfamily. Urease alpha subunit family. As to quaternary structure, heterohexamer of 3 UreC (alpha) and 3 UreAB (gamma/beta) subunits. Ni cation serves as cofactor. Post-translationally, carboxylation allows a single lysine to coordinate two nickel ions.

Its subcellular location is the cytoplasm. The catalysed reaction is urea + 2 H2O + H(+) = hydrogencarbonate + 2 NH4(+). It functions in the pathway nitrogen metabolism; urea degradation; CO(2) and NH(3) from urea (urease route): step 1/1. The polypeptide is Urease subunit alpha (Sulfurisphaera tokodaii (strain DSM 16993 / JCM 10545 / NBRC 100140 / 7) (Sulfolobus tokodaii)).